The following is an 83-amino-acid chain: Large ribosomal subunit protein bL27 (83 aa).

Belongs to the bacterial ribosomal protein bL27 family.

The sequence is that of Large ribosomal subunit protein bL27 from Bifidobacterium adolescentis (strain ATCC 15703 / DSM 20083 / NCTC 11814 / E194a).